The following is a 203-amino-acid chain: Large ribosomal subunit protein bL25 (203 aa).

It belongs to the bacterial ribosomal protein bL25 family. CTC subfamily. Part of the 50S ribosomal subunit; part of the 5S rRNA/L5/L18/L25 subcomplex. Contacts the 5S rRNA. Binds to the 5S rRNA independently of L5 and L18.

This is one of the proteins that binds to the 5S RNA in the ribosome where it forms part of the central protuberance. The polypeptide is Large ribosomal subunit protein bL25 (Paraburkholderia phymatum (strain DSM 17167 / CIP 108236 / LMG 21445 / STM815) (Burkholderia phymatum)).